The chain runs to 151 residues: MDRKKIAVTAGTFDLLHPGHFNTLNFAKKHADELIVIIARDETVKKIKGRRPVIPEEQRKIMIEALKPVDRAVLGSLNDKLEPIININPDIIIIGPDQTTYQINELKRQLLNHGLKPEIIKVEEYVNCQFHSSYDILKEIVRRWCNKELKV.

ATP is bound by residues Thr-12 to Phe-13, His-17 to His-20, Asp-97, and Tyr-125.

This sequence belongs to the archaeal FAD synthase family. Homodimer. The cofactor is a divalent metal cation.

It catalyses the reaction FMN + ATP + H(+) = FAD + diphosphate. It participates in cofactor biosynthesis; FAD biosynthesis; FAD from FMN: step 1/1. Its function is as follows. Catalyzes the transfer of the AMP portion of ATP to flavin mononucleotide (FMN) to produce flavin adenine dinucleotide (FAD) coenzyme. The polypeptide is FAD synthase (Methanococcus vannielii (strain ATCC 35089 / DSM 1224 / JCM 13029 / OCM 148 / SB)).